Consider the following 300-residue polypeptide: Ribosomal RNA small subunit methyltransferase H (300 aa).

S-adenosyl-L-methionine is bound by residues 46–48 (GGH), aspartate 65, phenylalanine 92, aspartate 107, and glutamine 114.

The protein belongs to the methyltransferase superfamily. RsmH family.

The protein localises to the cytoplasm. The catalysed reaction is cytidine(1402) in 16S rRNA + S-adenosyl-L-methionine = N(4)-methylcytidine(1402) in 16S rRNA + S-adenosyl-L-homocysteine + H(+). Functionally, specifically methylates the N4 position of cytidine in position 1402 (C1402) of 16S rRNA. The sequence is that of Ribosomal RNA small subunit methyltransferase H from Prochlorococcus marinus (strain MIT 9215).